A 132-amino-acid polypeptide reads, in one-letter code: L-ectoine synthase (132 aa).

The protein belongs to the ectoine synthase family.

It carries out the reaction (2S)-4-acetamido-2-aminobutanoate = L-ectoine + H2O. Its pathway is amine and polyamine biosynthesis; ectoine biosynthesis; L-ectoine from L-aspartate 4-semialdehyde: step 3/3. Its function is as follows. Catalyzes the circularization of gamma-N-acetyl-alpha,gamma-diaminobutyric acid (ADABA) to ectoine (1,4,5,6-tetrahydro-2-methyl-4-pyrimidine carboxylic acid), which is an excellent osmoprotectant. The sequence is that of L-ectoine synthase from Teredinibacter turnerae (strain ATCC 39867 / T7901).